A 371-amino-acid chain; its full sequence is Queuine tRNA-ribosyltransferase (371 aa).

Residue Asp90 is the Proton acceptor of the active site. Residues 90 to 94, Asp144, Gln189, and Gly215 each bind substrate; that span reads DSGGF. The tract at residues 246-252 is RNA binding; sequence GVGTPEN. The Nucleophile role is filled by Asp265. The interval 270-274 is RNA binding; important for wobble base 34 recognition; sequence TRNAR. Residues Cys303, Cys305, Cys308, and His334 each contribute to the Zn(2+) site.

Belongs to the queuine tRNA-ribosyltransferase family. In terms of assembly, homodimer. Within each dimer, one monomer is responsible for RNA recognition and catalysis, while the other monomer binds to the replacement base PreQ1. The cofactor is Zn(2+).

It catalyses the reaction 7-aminomethyl-7-carbaguanine + guanosine(34) in tRNA = 7-aminomethyl-7-carbaguanosine(34) in tRNA + guanine. It participates in tRNA modification; tRNA-queuosine biosynthesis. Its function is as follows. Catalyzes the base-exchange of a guanine (G) residue with the queuine precursor 7-aminomethyl-7-deazaguanine (PreQ1) at position 34 (anticodon wobble position) in tRNAs with GU(N) anticodons (tRNA-Asp, -Asn, -His and -Tyr). Catalysis occurs through a double-displacement mechanism. The nucleophile active site attacks the C1' of nucleotide 34 to detach the guanine base from the RNA, forming a covalent enzyme-RNA intermediate. The proton acceptor active site deprotonates the incoming PreQ1, allowing a nucleophilic attack on the C1' of the ribose to form the product. After dissociation, two additional enzymatic reactions on the tRNA convert PreQ1 to queuine (Q), resulting in the hypermodified nucleoside queuosine (7-(((4,5-cis-dihydroxy-2-cyclopenten-1-yl)amino)methyl)-7-deazaguanosine). The chain is Queuine tRNA-ribosyltransferase from Helicobacter pylori (strain Shi470).